The chain runs to 362 residues: uncharacterized protein (362 aa).

This is an uncharacterized protein from Escherichia coli (strain K12).